We begin with the raw amino-acid sequence, 364 residues long: Chorismate synthase (364 aa).

Residue arginine 47 participates in NADP(+) binding. FMN-binding positions include 125-127 (RAS), glycine 288, 303-307 (KPTAT), and arginine 329.

It belongs to the chorismate synthase family. As to quaternary structure, homotetramer. Requires FMNH2 as cofactor.

The enzyme catalyses 5-O-(1-carboxyvinyl)-3-phosphoshikimate = chorismate + phosphate. The protein operates within metabolic intermediate biosynthesis; chorismate biosynthesis; chorismate from D-erythrose 4-phosphate and phosphoenolpyruvate: step 7/7. In terms of biological role, catalyzes the anti-1,4-elimination of the C-3 phosphate and the C-6 proR hydrogen from 5-enolpyruvylshikimate-3-phosphate (EPSP) to yield chorismate, which is the branch point compound that serves as the starting substrate for the three terminal pathways of aromatic amino acid biosynthesis. This reaction introduces a second double bond into the aromatic ring system. This Synechococcus sp. (strain CC9902) protein is Chorismate synthase.